Consider the following 341-residue polypeptide: Methionine import ATP-binding protein MetN (341 aa).

The 239-residue stretch at 9–247 folds into the ABC transporter domain; that stretch reads ISVQDVSKKL…SENSITNELF (239 aa). An ATP-binding site is contributed by 41–48; sequence GHSGSGKT.

This sequence belongs to the ABC transporter superfamily. Methionine importer (TC 3.A.1.24) family. As to quaternary structure, the complex is composed of two ATP-binding proteins (MetN), two transmembrane proteins (MetI) and a solute-binding protein (MetQ).

It is found in the cell inner membrane. The catalysed reaction is L-methionine(out) + ATP + H2O = L-methionine(in) + ADP + phosphate + H(+). It carries out the reaction D-methionine(out) + ATP + H2O = D-methionine(in) + ADP + phosphate + H(+). Functionally, part of the ABC transporter complex MetNIQ involved in methionine import. Responsible for energy coupling to the transport system. The protein is Methionine import ATP-binding protein MetN of Chlamydia pneumoniae (Chlamydophila pneumoniae).